The primary structure comprises 880 residues: Alanine--tRNA ligase (880 aa).

Positions 567, 571, 669, and 673 each coordinate Zn(2+).

Belongs to the class-II aminoacyl-tRNA synthetase family. Zn(2+) serves as cofactor.

The protein resides in the cytoplasm. The catalysed reaction is tRNA(Ala) + L-alanine + ATP = L-alanyl-tRNA(Ala) + AMP + diphosphate. Functionally, catalyzes the attachment of alanine to tRNA(Ala) in a two-step reaction: alanine is first activated by ATP to form Ala-AMP and then transferred to the acceptor end of tRNA(Ala). Also edits incorrectly charged Ser-tRNA(Ala) and Gly-tRNA(Ala) via its editing domain. This is Alanine--tRNA ligase from Bacillus thuringiensis (strain Al Hakam).